The sequence spans 174 residues: SUSHI domain-containing protein E3 (174 aa).

A signal peptide spans 1 to 20; that stretch reads MATEVQFACALVVLLGCGYA. The 63-residue stretch at 35 to 97 folds into the Sushi domain; it reads QNCTTYPSIE…WTNGPPSCVK (63 aa). Cystine bridges form between Cys-37–Cys-78 and Cys-64–Cys-95. Positions 108–127 are enriched in low complexity; it reads STSTTPVTTGTFPDPQNTTH. Positions 108–133 are disordered; the sequence is STSTTPVTTGTFPDPQNTTHPTHHTV. The chain crosses the membrane as a helical span at residues 145–165; that stretch reads FGYTPWAIITLVVIILLVVWI.

The protein resides in the host membrane. The polypeptide is SUSHI domain-containing protein E3 (E3) (Equine herpesvirus 2 (strain 86/87) (EHV-2)).